A 468-amino-acid chain; its full sequence is Glutamate--tRNA ligase (468 aa).

Residues 9-19 (PSPTGYLHVGG) carry the 'HIGH' region motif. Zn(2+) contacts are provided by Cys-98, Cys-100, Cys-125, and Asp-127. Residues 235–239 (KLSKR) carry the 'KMSKS' region motif. Lys-238 contacts ATP.

It belongs to the class-I aminoacyl-tRNA synthetase family. Glutamate--tRNA ligase type 1 subfamily. As to quaternary structure, monomer. The cofactor is Zn(2+).

The protein localises to the cytoplasm. The enzyme catalyses tRNA(Glu) + L-glutamate + ATP = L-glutamyl-tRNA(Glu) + AMP + diphosphate. Its function is as follows. Catalyzes the attachment of glutamate to tRNA(Glu) in a two-step reaction: glutamate is first activated by ATP to form Glu-AMP and then transferred to the acceptor end of tRNA(Glu). The protein is Glutamate--tRNA ligase of Idiomarina loihiensis (strain ATCC BAA-735 / DSM 15497 / L2-TR).